The primary structure comprises 229 residues: Ribonuclease 3 (229 aa).

The region spanning 5 to 127 (LNRLERKLGH…LIGAIYLDAG (123 aa)) is the RNase III domain. Glutamate 40 lines the Mg(2+) pocket. Aspartate 44 is an active-site residue. Mg(2+) contacts are provided by aspartate 113 and glutamate 116. The active site involves glutamate 116. The region spanning 154–224 (DPKTRLQEFL…AAAALVALGV (71 aa)) is the DRBM domain.

It belongs to the ribonuclease III family. As to quaternary structure, homodimer. Mg(2+) serves as cofactor.

The protein localises to the cytoplasm. The enzyme catalyses Endonucleolytic cleavage to 5'-phosphomonoester.. In terms of biological role, digests double-stranded RNA. Involved in the processing of primary rRNA transcript to yield the immediate precursors to the large and small rRNAs (23S and 16S). Processes some mRNAs, and tRNAs when they are encoded in the rRNA operon. Processes pre-crRNA and tracrRNA of type II CRISPR loci if present in the organism. This chain is Ribonuclease 3, found in Azotobacter vinelandii (strain DJ / ATCC BAA-1303).